The primary structure comprises 357 residues: Probable butyrate kinase (357 aa).

This sequence belongs to the acetokinase family.

The protein resides in the cytoplasm. It catalyses the reaction butanoate + ATP = butanoyl phosphate + ADP. The sequence is that of Probable butyrate kinase from Thermotoga petrophila (strain ATCC BAA-488 / DSM 13995 / JCM 10881 / RKU-1).